The chain runs to 283 residues: MMTHWPSPAKLNLFLYITGQRADGYHTLQTLFQFLDYGDTIGITPRGDGEIHLLTPVEGVENDDNLIVRAARLLMKTASAHGRLPAGSGADISIEKRLPMGGGLGGGSSNAATVLVALNHLWQCGLSVDELAETGLTLGADVPVFVRGHAAFAEGVGEILTPVDPPEKWYLVAHPGVSIPTPVIFKDPELPRNTPKRSIETLLKCEFGNDCEVIARKRFREVDAALSWLLEYAPSRLTGTGACVFAEFDTESAARQVLKQAPEWLNAFVAKGVNLSPLQKAML.

The active site involves Lys-10. 99–109 contacts ATP; sequence PMGGGLGGGSS. Residue Asp-141 is part of the active site.

This sequence belongs to the GHMP kinase family. IspE subfamily. As to quaternary structure, homodimer.

It catalyses the reaction 4-CDP-2-C-methyl-D-erythritol + ATP = 4-CDP-2-C-methyl-D-erythritol 2-phosphate + ADP + H(+). It participates in isoprenoid biosynthesis; isopentenyl diphosphate biosynthesis via DXP pathway; isopentenyl diphosphate from 1-deoxy-D-xylulose 5-phosphate: step 3/6. In terms of biological role, catalyzes the phosphorylation of the position 2 hydroxy group of 4-diphosphocytidyl-2C-methyl-D-erythritol. This chain is 4-diphosphocytidyl-2-C-methyl-D-erythritol kinase, found in Citrobacter koseri (strain ATCC BAA-895 / CDC 4225-83 / SGSC4696).